The following is a 186-amino-acid chain: Trafficking protein particle complex subunit 5 (186 aa).

Belongs to the TRAPP small subunits family. BET3 subfamily. Part of the multisubunit TRAPP (transport protein particle) complex.

The protein resides in the golgi apparatus. It is found in the cis-Golgi network. The protein localises to the endoplasmic reticulum. Functionally, may play a role in vesicular transport from endoplasmic reticulum to Golgi. In Dictyostelium discoideum (Social amoeba), this protein is Trafficking protein particle complex subunit 5 (trappc5).